The following is a 410-amino-acid chain: Lissencephaly-1 homolog (410 aa).

The 33-residue stretch at 7 to 39 (QQEELQLAVHAYLVEAGHAEAAAAMAKSANLGD) folds into the LisH domain. Positions 55 to 80 (TTITRLQKRNMELQAEVEELRSSARA) form a coiled coil. WD repeat units lie at residues 104–143 (GHRLPITAVAIHPSFAVMASASEDASIKLWDMESGNFERS), 146–185 (GHTNAVNDIAYDREGNRLVSCSTDMTIKVWNMDNFTCTKT), 188–227 (GHDHTVSSVRFDHTGDRVFSASRDKTIKIWELATGYCLQT), 230–269 (GHSDWVRSIDVSADGAWICSASSDHTVRVWSVASGECKHV), 294–333 (MIFGSKPSAEAASKGPFVASASRDKSICLFDVSTGQHLAR), 336–375 (GHDNWVRATAWSRGGRYLFSVADDKTMRVWDIATKRVSKT), and 378–410 (AHNHFVSCIAVHAKNTHVVTGSVDLKVKVWECN).

This sequence belongs to the WD repeat LIS1/nudF family.

The protein localises to the cytoplasm. The protein resides in the cytoskeleton. It localises to the microtubule organizing center. Its subcellular location is the centrosome. In terms of biological role, positively regulates the activity of the minus-end directed microtubule motor protein dynein. May enhance dynein-mediated microtubule sliding by targeting dynein to the microtubule plus end. Required for several dynein- and microtubule-dependent processes. The chain is Lissencephaly-1 homolog from Monosiga brevicollis (Choanoflagellate).